A 395-amino-acid polypeptide reads, in one-letter code: Leukosialin (395 aa).

Positions Met-1–Pro-19 are cleaved as a signal peptide. Over Asp-20–Gly-248 the chain is Extracellular. The span at Met-27–Val-56 shows a compositional bias: polar residues. A disordered region spans residues Met-27 to Glu-245. Residues Ser-73 to Ser-88 show a composition bias toward low complexity. 2 stretches are compositionally biased toward polar residues: residues Ala-89–Ser-111 and Thr-145–Gly-154. Positions Thr-155 to Ser-166 are enriched in low complexity. An N-linked (GlcNAc...) asparagine glycan is attached at Asn-167. Over residues Asn-167–Pro-196 the composition is skewed to polar residues. A compositionally biased stretch (low complexity) spans Ala-205–Ser-241. A helical transmembrane segment spans residues Met-249 to Trp-271. Residues Arg-272 to Arg-302 are required for interaction with EZR, MSN and RDX and for co-localization to microvilli. The Cytoplasmic portion of the chain corresponds to Arg-272–Leu-395. The Nuclear localization signal signature appears at Lys-276–Arg-290. A phosphoserine mark is found at Ser-285 and Ser-328. The interval Val-303–Leu-395 is disordered. Positions Gly-327–Phe-338 are enriched in polar residues. Thr-333 bears the Phosphothreonine mark. Ser-339 and Ser-343 each carry phosphoserine. Phosphoserine; by PKC/PRKCQ is present on Ser-347. Residue Ser-371 is modified to Phosphoserine. At Thr-378 the chain carries Phosphothreonine. Positions Gln-385–Leu-395 are enriched in basic and acidic residues.

In terms of assembly, interacts with SIGLEC1. Interacts with isoform 2 of HIPK2. Interacts with CTNNB1. Interacts with RDX (via FERM domain). Interacts with EZR. Interacts with MSN. Post-translationally, phosphorylation at Ser-347 is regulated by chemokines, requires its association with ERM proteins (EZR, RDX and MSN) and is essential for its function in the regulation of T-cell trafficking to lymph nodes. Has a high content of sialic acid and O-linked carbohydrate structures. In terms of processing, cleavage by CTSG releases its extracellular domain and triggers its intramembrane proteolysis by gamma-secretase releasing the CD43 cytoplasmic tail chain (CD43-ct) which translocates to the nucleus. Post-translationally, sumoylated. Cell surface of thymocytes, T-lymphocytes, neutrophils, plasma cells and myelomas.

The protein localises to the membrane. It localises to the cell projection. Its subcellular location is the microvillus. The protein resides in the uropodium. It is found in the nucleus. The protein localises to the PML body. Its function is as follows. Predominant cell surface sialoprotein of leukocytes which regulates multiple T-cell functions, including T-cell activation, proliferation, differentiation, trafficking and migration. Positively regulates T-cell trafficking to lymph-nodes via its association with ERM proteins (EZR, RDX and MSN). Negatively regulates Th2 cell differentiation and predisposes the differentiation of T-cells towards a Th1 lineage commitment. Promotes the expression of IFN-gamma by T-cells during T-cell receptor (TCR) activation of naive cells and induces the expression of IFN-gamma by CD4(+) T-cells and to a lesser extent by CD8(+) T-cells. Plays a role in preparing T-cells for cytokine sensing and differentiation into effector cells by inducing the expression of cytokine receptors IFNGR and IL4R, promoting IFNGR and IL4R signaling and by mediating the clustering of IFNGR with TCR. Acts as a major E-selectin ligand responsible for Th17 cell rolling on activated vasculature and recruitment during inflammation. Mediates Th17 cells, but not Th1 cells, adhesion to E-selectin. Acts as a T-cell counter-receptor for SIGLEC1. Functionally, protects cells from apoptotic signals, promoting cell survival. This chain is Leukosialin (Spn), found in Mus musculus (Mouse).